A 468-amino-acid polypeptide reads, in one-letter code: Glutamate--tRNA ligase 2 (468 aa).

Positions 9 to 19 (PSPTGSLHLGG) match the 'HIGH' region motif. The 'KMSKS' region signature appears at 238-242 (KLSKR). Position 241 (lysine 241) interacts with ATP.

It belongs to the class-I aminoacyl-tRNA synthetase family. Glutamate--tRNA ligase type 1 subfamily. In terms of assembly, monomer.

It localises to the cytoplasm. The catalysed reaction is tRNA(Glu) + L-glutamate + ATP = L-glutamyl-tRNA(Glu) + AMP + diphosphate. Functionally, catalyzes the attachment of glutamate to tRNA(Glu) in a two-step reaction: glutamate is first activated by ATP to form Glu-AMP and then transferred to the acceptor end of tRNA(Glu). This chain is Glutamate--tRNA ligase 2, found in Anaplasma phagocytophilum (strain HZ).